Consider the following 772-residue polypeptide: MGWFTGIACLFWGVLLTARANYANGKNNVPRLKLSYKEMLESNNVITFNGLANSSSYHTFLLDEERSRLYVGAKDHIFSFNLVNIKDFQKIVWPVSYTRRDECKWAGKDILKECANFIKVLEAYNQTHLYACGTGAFHPICTYIEVGHHPEDNIFKLQDSHFENGRGKSPYDPKLLTASLLIDGELYSGTAADFMGRDFAIFRTLGHHHPIRTEQHDSRWLNDPRFISAHLIPESDNPEDDKVYFFFRENAIDGEHSGKATHARIGQICKNDFGGHRSLVNKWTTFLKARLICSVPGPNGIDTHFDELQDVFLMNSKDPKNPIVYGVFTTSSNIFKGSAVCMYSMSDVRRVFLGPYAHRDGPNYQWVPYQGRVPYPRPGTCPSKTFGGFDSTKDLPDDVITFARSHPAMYNPVFPINNRPIMIKTDVNYQFTQIVVDRVDAEDGQYDVMFIGTDVGTVLKVVSVPKETWHDLEEILLEEMTVFREPTTISAMELSTKQQQLYIGSTAGVAQLPLHRCDIYGKACAECCLARDPYCAWDGSSCSRYFPTAKRRTRRQDIRNGDPLTHCSDLQHHDNHHGPSLEERIIYGVENSSTFLECSPKSQRALVYWQFQRRNEDRKEEIRMGDHIIRTEQGLLLRSLQKKDSGNYLCHAVEHGFMQTLLKVTLEVIDTEHLEELLHKDDDGDGSKIKEMSSSMTPSQKVWYRDFMQLINHPNLNTMDEFCEQVWKRDRKQRRQRPGHSQGSSNKWKHMQESKKGRNRRTHEFERAPRSV.

The N-terminal stretch at 1 to 20 is a signal peptide; that stretch reads MGWFTGIACLFWGVLLTARA. The Sema domain occupies 31–514; sequence RLKLSYKEML…STAGVAQLPL (484 aa). An N-linked (GlcNAc...) asparagine glycan is attached at asparagine 53. Cysteine 103 and cysteine 114 are oxidised to a cystine. An N-linked (GlcNAc...) asparagine glycan is attached at asparagine 125. Disulfide bonds link cysteine 132/cysteine 141, cysteine 269/cysteine 381, cysteine 293/cysteine 341, and cysteine 517/cysteine 535. Residues 579–665 form the Ig-like C2-type domain; it reads PSLEERIIYG…GFMQTLLKVT (87 aa). An N-linked (GlcNAc...) asparagine glycan is attached at asparagine 591. A disulfide bridge links cysteine 650 with cysteine 723. Residues 729-738 show a composition bias toward basic residues; sequence RDRKQRRQRP. A disordered region spans residues 729 to 772; sequence RDRKQRRQRPGHSQGSSNKWKHMQESKKGRNRRTHEFERAPRSV. Positions 750–772 are enriched in basic and acidic residues; the sequence is HMQESKKGRNRRTHEFERAPRSV.

It belongs to the semaphorin family. In terms of assembly, interacts with PXND1.

The protein resides in the secreted. Its function is as follows. Plays a role in growth cones guidance. May function to pattern sensory projections by selectively repelling axons that normally terminate dorsally. Involved in the development of the olfactory system and in neuronal control of puberty. The sequence is that of Semaphorin-3A (Sema3a) from Mus musculus (Mouse).